A 214-amino-acid polypeptide reads, in one-letter code: Large ribosomal subunit protein uL3 (214 aa).

The interval 133–153 (GRATHGNSRSHNVPGSIGMAQ) is disordered. The residue at position 153 (Gln-153) is an N5-methylglutamine.

This sequence belongs to the universal ribosomal protein uL3 family. As to quaternary structure, part of the 50S ribosomal subunit. Forms a cluster with proteins L14 and L19. Methylated by PrmB.

Its function is as follows. One of the primary rRNA binding proteins, it binds directly near the 3'-end of the 23S rRNA, where it nucleates assembly of the 50S subunit. This is Large ribosomal subunit protein uL3 from Cupriavidus metallidurans (strain ATCC 43123 / DSM 2839 / NBRC 102507 / CH34) (Ralstonia metallidurans).